We begin with the raw amino-acid sequence, 395 residues long: Putative nickel insertion protein (395 aa).

It belongs to the LarC family.

The sequence is that of Putative nickel insertion protein from Roseiflexus castenholzii (strain DSM 13941 / HLO8).